The sequence spans 522 residues: Lysine--tRNA ligase (522 aa).

The 'HIGH' region motif lies at Pro-44–Thr-52. A 'KMSKS' region motif is present at residues Lys-290–Ser-294. Lys-293 provides a ligand contact to ATP.

It belongs to the class-I aminoacyl-tRNA synthetase family.

Its subcellular location is the cytoplasm. It carries out the reaction tRNA(Lys) + L-lysine + ATP = L-lysyl-tRNA(Lys) + AMP + diphosphate. The polypeptide is Lysine--tRNA ligase (Rickettsia massiliae (strain Mtu5)).